A 237-amino-acid chain; its full sequence is Ribonuclease PH (237 aa).

Phosphate is bound by residues Arg86 and Gly124 to Arg126.

The protein belongs to the RNase PH family. In terms of assembly, homohexameric ring arranged as a trimer of dimers.

The catalysed reaction is tRNA(n+1) + phosphate = tRNA(n) + a ribonucleoside 5'-diphosphate. Functionally, phosphorolytic 3'-5' exoribonuclease that plays an important role in tRNA 3'-end maturation. Removes nucleotide residues following the 3'-CCA terminus of tRNAs; can also add nucleotides to the ends of RNA molecules by using nucleoside diphosphates as substrates, but this may not be physiologically important. Probably plays a role in initiation of 16S rRNA degradation (leading to ribosome degradation) during starvation. This Shewanella piezotolerans (strain WP3 / JCM 13877) protein is Ribonuclease PH.